The following is a 215-amino-acid chain: Rod-determining factor A (215 aa).

In terms of biological role, involved in cell-shape determination. Required for the formation of rods and wild-type-like motility. The sequence is that of Rod-determining factor A from Haloferax volcanii (strain ATCC 29605 / DSM 3757 / JCM 8879 / NBRC 14742 / NCIMB 2012 / VKM B-1768 / DS2) (Halobacterium volcanii).